The primary structure comprises 41 residues: Sucrose porin (41 aa).

The signal sequence occupies residues 1-22 (MYRKSTLAMLIALLTSAASAHA).

The protein belongs to the porin LamB (TC 1.B.3) family. Homotrimer.

It localises to the cell outer membrane. Functionally, porin for sucrose uptake. This Salmonella thompson protein is Sucrose porin (scrY).